Consider the following 311-residue polypeptide: Deoxyhypusine hydroxylase (311 aa).

5 HEAT-like PBS-type repeats span residues 69–95 (LKHE…VLEN), 102–128 (VRHE…YFKN), 196–222 (ERYR…GLDD), 228–254 (FKHE…TLKD), and 261–287 (VRHE…FLND). Fe cation is bound by residues His71, Glu72, His104, and Glu105. Residues His230, Glu231, His263, and Glu264 each coordinate Fe cation.

It belongs to the deoxyhypusine hydroxylase family. Fe(2+) serves as cofactor.

The protein resides in the cytoplasm. The protein localises to the nucleus. It carries out the reaction [eIF5A protein]-deoxyhypusine + AH2 + O2 = [eIF5A protein]-hypusine + A + H2O. It functions in the pathway protein modification; eIF5A hypusination. In terms of biological role, catalyzes the hydroxylation of the N(6)-(4-aminobutyl)-L-lysine intermediate to form hypusine, an essential post-translational modification only found in mature eIF-5A factor. This chain is Deoxyhypusine hydroxylase, found in Debaryomyces hansenii (strain ATCC 36239 / CBS 767 / BCRC 21394 / JCM 1990 / NBRC 0083 / IGC 2968) (Yeast).